We begin with the raw amino-acid sequence, 171 residues long: MNSIPEGRPTPNLPRTANKRGVARLAAVQALYQMDVAGTGVMEVVAEYEAFRLGKEVDGTQYLDADPQWFRAIVAGVVEDQLKLDPMIHQALTEDWPLSRLDSTLRAILRAGAWELKARKDVPTAVIVSEYVDIAKAFYTEDEPKLVNAVLDRLALVIRGESRGAKPRHKS.

This sequence belongs to the NusB family.

Functionally, involved in transcription antitermination. Required for transcription of ribosomal RNA (rRNA) genes. Binds specifically to the boxA antiterminator sequence of the ribosomal RNA (rrn) operons. This chain is Transcription antitermination protein NusB, found in Brucella ovis (strain ATCC 25840 / 63/290 / NCTC 10512).